The sequence spans 233 residues: Cysteine-rich venom protein LIO1 (233 aa).

An N-terminal signal peptide occupies residues 1–18 (MIVFILLSFAAVLQQSFG). The 129-residue stretch at 37–165 (VDTHNSYRRS…PYNYFYVCQY (129 aa)) folds into the SCP domain. Cystine bridges form between Cys-74–Cys-152, Cys-91–Cys-166, Cys-147–Cys-163, Cys-185–Cys-192, Cys-188–Cys-197, Cys-210–Cys-228, and Cys-219–Cys-232. One can recognise a ShKT domain in the interval 201–233 (CTSENVFTNCNDMVKESGCQDERMKSICPASCF).

The protein belongs to the CRISP family. Expressed by the venom gland.

Its subcellular location is the secreted. Its function is as follows. Blocks contraction of smooth muscle elicited by high potassium-induced depolarization, but does not block caffeine-stimulated contraction. May target voltage-gated calcium channels on smooth muscle. The polypeptide is Cysteine-rich venom protein LIO1 (Erythrolamprus poecilogyrus (Water snake)).